Consider the following 438-residue polypeptide: Telomeric repeat-binding factor 1 (438 aa).

Over residues methionine 1 to proline 10 the composition is skewed to polar residues. The tract at residues methionine 1–glutamine 36 is disordered. Alanine 2 is subject to N-acetylalanine. Residue serine 11 is modified to Phosphoserine. Residues glutamate 58 to arginine 268 are TRFH dimerization. A Glycyl lysine isopeptide (Lys-Gly) (interchain with G-Cter in SUMO2) cross-link involves residue lysine 213. Serine 219 is subject to Phosphoserine; by ATM. The interval glutamate 265–arginine 378 is interaction with RLIM. A disordered region spans residues arginine 268–threonine 311. The segment covering aspartate 299 to threonine 311 has biased composition (polar residues). A Glycyl lysine isopeptide (Lys-Gly) (interchain with G-Cter in SUMO2) cross-link involves residue lysine 325. The interval leucine 326–histidine 375 is disordered. Positions lysine 337–arginine 356 match the Nuclear localization signal motif. Lysine 366 participates in a covalent cross-link: Glycyl lysine isopeptide (Lys-Gly) (interchain with G-Cter in SUMO2). Positions histidine 375–leucine 432 constitute an HTH myb-type domain. A DNA-binding region (H-T-H motif) is located at residues tryptophan 403–lysine 428.

Homodimer; can contain both isoforms. Found in a complex with POT1; TINF2 and TNKS1. Interacts with ATM, TINF2, TNKS1, TNKS2, PINX1, NEK2 and MAPRE1. Component of the shelterin complex (telosome) composed of TERF1, TERF2, TINF2, TERF2IP ACD and POT1. Interacts with RLIM (via N-terminus). Interacts with FBXO4. Interaction with TINF2 protects against interaction with FBXO4 and subsequent polyubiquitination and proteasomal degradation. Interacts with GNL3L; this interaction promotes homodimerization. Interacts with TIN2. Interactions with GNL3L and TIN2 are mutually exclusive. Interacts with RTEL1. Interacts with CCDC79/TERB1. In terms of processing, phosphorylated preferentially on Ser-219 in an ATM-dependent manner in response to ionizing DNA damage. Post-translationally, ADP-ribosylation by TNKS1 or TNKS2 diminishes its ability to bind to telomeric DNA. Ubiquitinated by RLIM/RNF12, leading to its degradation by the proteasome. Ubiquitinated by a SCF (SKP1-CUL1-F-box protein) ubiquitin-protein ligase complex, leading to its degradation by the proteasome.

It is found in the nucleus. The protein resides in the chromosome. The protein localises to the telomere. Its subcellular location is the cytoplasm. It localises to the cytoskeleton. It is found in the spindle. Binds the telomeric double-stranded 5'-TTAGGG-3' repeat and negatively regulates telomere length. Involved in the regulation of the mitotic spindle. Component of the shelterin complex (telosome) that is involved in the regulation of telomere length and protection. Shelterin associates with arrays of double-stranded 5'-TTAGGG-3' repeats added by telomerase and protects chromosome ends; without its protective activity, telomeres are no longer hidden from the DNA damage surveillance and chromosome ends are inappropriately processed by DNA repair pathways. The polypeptide is Telomeric repeat-binding factor 1 (TERF1) (Cricetulus griseus (Chinese hamster)).